Consider the following 364-residue polypeptide: Aminomethyltransferase (364 aa).

This sequence belongs to the GcvT family. In terms of assembly, the glycine cleavage system is composed of four proteins: P, T, L and H.

The enzyme catalyses N(6)-[(R)-S(8)-aminomethyldihydrolipoyl]-L-lysyl-[protein] + (6S)-5,6,7,8-tetrahydrofolate = N(6)-[(R)-dihydrolipoyl]-L-lysyl-[protein] + (6R)-5,10-methylene-5,6,7,8-tetrahydrofolate + NH4(+). Its function is as follows. The glycine cleavage system catalyzes the degradation of glycine. The protein is Aminomethyltransferase of Geobacillus sp. (strain WCH70).